A 205-amino-acid polypeptide reads, in one-letter code: Glycerol-3-phosphate acyltransferase (205 aa).

Helical transmembrane passes span Ile-4 to Val-24, Pro-80 to Phe-100, Phe-112 to Leu-132, and Gly-138 to Phe-158.

It belongs to the PlsY family. In terms of assembly, probably interacts with PlsX.

Its subcellular location is the cell inner membrane. The catalysed reaction is an acyl phosphate + sn-glycerol 3-phosphate = a 1-acyl-sn-glycero-3-phosphate + phosphate. The protein operates within lipid metabolism; phospholipid metabolism. Catalyzes the transfer of an acyl group from acyl-phosphate (acyl-PO(4)) to glycerol-3-phosphate (G3P) to form lysophosphatidic acid (LPA). This enzyme utilizes acyl-phosphate as fatty acyl donor, but not acyl-CoA or acyl-ACP. The chain is Glycerol-3-phosphate acyltransferase from Cronobacter sakazakii (strain ATCC BAA-894) (Enterobacter sakazakii).